The chain runs to 299 residues: MGAIASMGPLFSLMILLAATSELLAACWRNLVLGVVQGLTEFLPISSTAHLKVVPMLVGWGDPGVSATAVIQLGSILAVIAYFKRDLAEVLKGIALAFKHGQWREPNARLGLAIAIGTMPILLAGMAIKLFWPGYEASSIRSLPSIAVVSIVMALLLALAESFGPRLKQMHLVKGRDGFVVGLAQALALIPGVSRSGSTLTASLFDGWQRQDAARFCFLLGIPAITLAGLVELKDAFAELSLGGVLPLLVGIVSAAFVSWLAIDWLLKYLQSHSTWIFVVYRLLFGVLVLAWWLSGRSN.

The next 8 helical transmembrane spans lie at 10–32 (LFSLMILLAATSELLAACWRNLV), 63–83 (PGVSATAVIQLGSILAVIAYF), 112–132 (LAIAIGTMPILLAGMAIKLFW), 143–163 (LPSIAVVSIVMALLLALAESF), 178–198 (GFVVGLAQALALIPGVSRSGS), 213–233 (AARFCFLLGIPAITLAGLVEL), 243–263 (GGVLPLLVGIVSAAFVSWLAI), and 276–296 (WIFVVYRLLFGVLVLAWWLSG).

This sequence belongs to the UppP family.

It is found in the cell inner membrane. It catalyses the reaction di-trans,octa-cis-undecaprenyl diphosphate + H2O = di-trans,octa-cis-undecaprenyl phosphate + phosphate + H(+). In terms of biological role, catalyzes the dephosphorylation of undecaprenyl diphosphate (UPP). Confers resistance to bacitracin. This chain is Undecaprenyl-diphosphatase, found in Prochlorococcus marinus (strain MIT 9313).